The following is a 246-amino-acid chain: Allergin-1 (246 aa).

The signal sequence occupies residues 1–33; sequence MGDGDSPMCLSAVSFKGIRCWLDKLLLWALTIS. Residues 34 to 150 lie on the Extracellular side of the membrane; sequence ITLQNAAVDC…DESCPSCRLS (117 aa). In terms of domain architecture, Ig-like C2-type spans 52–131; it reads PSPNLNSSMN…VNVSNLMKYS (80 aa). Residue N68 is glycosylated (N-linked (GlcNAc...) asparagine). Cysteines 73 and 120 form a disulfide. Residues 151–171 form a helical membrane-spanning segment; that stretch reads LLLPGLLLGILVIVLVLAYLI. Topologically, residues 172–246 are cytoplasmic; that stretch reads HLKYKKGKKT…ADYIYSELTH (75 aa). 2 short sequence motifs (ITIM motif) span residues 214–219 and 239–244; these read IHYATP and YIYSEL. Phosphotyrosine is present on residues Y216 and Y241.

In terms of assembly, monomer. Interacts (tyrosine-phosphorylated) with PTPN6, PTPN11 and INPP5D. In terms of processing, N-glycosylated. In terms of tissue distribution, expressed in myeloid cells (dendritic cells, macrophages and neutrophils but not in T-cells, B-cells or natural killer cells) and mast cells (at protein level).

The protein resides in the cell membrane. It localises to the secreted. In terms of biological role, immunoglobulin-like receptor which plays an inhibitory role in degranulation of mast cells. Negatively regulates IgE-mediated mast cell activation and suppresses the type I immediate hypersensitivity reaction. In Mus musculus (Mouse), this protein is Allergin-1 (Milr1).